Reading from the N-terminus, the 505-residue chain is MAQVINTNSLSLLTQNNLNKSQSSLSSAIERLSSGLRINSAKDDAAGQAIANRFTSNIKGLTQASRNANDGISIAQTTEGALNEINNNLQRVRELSVQATNGTNSDSDLKSIQDEIQQRLEEIDRVSNQTQFNGVKVLSQDNQMKIQVGANDGETITIDLQKIDVKSLGLDGFNVNGPKEATVGDLKSSFKNVTGYDTYAAGADKYRVDINSGAVVTDAVAPDKVYVNAANGQLTTDDAENNTAVDLFKTTKSTAGTAEAKAIAGAIKGGKEGDTFDYKGVTFTIDTKTGDDGNGKVSTTINGEKVTLTVADIAIGAADVNAATLQSSKNVYTSVVNGQFTFDDKTKNESAKLSDLEANNAVKGESKITVNGAEYTANATGDKITLAGKTMFIDKTASGVSTLINEDAAAAKKSTANPLASIDSALSKVDAVRSSLGAIQNRFDSAITNLGNTVTNLNSARSRIEDADYATEVSNMSKAQILQQAGTSVLAQANQVPQNVLSLLR.

The protein belongs to the bacterial flagellin family.

The protein localises to the secreted. It localises to the bacterial flagellum. Flagellin is the subunit protein which polymerizes to form the filaments of bacterial flagella. The sequence is that of Flagellin (fliC) from Salmonella dublin.